The following is a 259-amino-acid chain: MRAILDAHPDVRCGGETMLLPSFLTWQAGWRNDWVNNSGITQEVFDDAVSAFITEIVAKHSELAPRLCNKDPYTALWLPTIRRLYPNAKFILMIRDARAVVHSMIERKVPVAGYNTSDEISMFVQWNQELRKMTFQCNNAPGQCIKVYYERLIQKPAEEILRITNFLDLPFSQQMLRHQDLIGDEVDLNDQEFSASQVKNSINTKALTSWFDCFSEETLRKLDDVAPFLGILGYDTSISKPDYSTFADDDFYQFKNFYS.

Cysteine 13 and cysteine 68 are joined by a disulfide. The Proton donor/acceptor role is filled by glutamate 16. The N-linked (GlcNAc...) asparagine glycan is linked to asparagine 36. The 3'-phosphoadenylyl sulfate site is built by arginine 95, serine 103, and arginine 107. Asparagine 115 is a glycosylation site (N-linked (GlcNAc...) asparagine). A disulfide bridge links cysteine 137 with cysteine 144. 3'-phosphoadenylyl sulfate is bound by residues tyrosine 149 and 194-203 (SASQVKNSIN).

Belongs to the protein sulfotransferase family.

It carries out the reaction L-tyrosyl-[protein] + 3'-phosphoadenylyl sulfate = O-sulfo-L-tyrosine-[protein] + adenosine 3',5'-bisphosphate + H(+). Functionally, catalyzes the O-sulfation of tyrosine residues within acidic motifs of polypeptides, using 3'-phosphoadenylyl sulfate (PAPS) as cosubstrate. The chain is Putative protein-tyrosine sulfotransferase (tpst-2) from Caenorhabditis elegans.